We begin with the raw amino-acid sequence, 251 residues long: Flap endonuclease Xni (251 aa).

Residue aspartate 104 coordinates Mg(2+). The 5'-3' exonuclease domain maps to valine 160–leucine 249. Positions 171, 172, 180, 182, and 185 each coordinate K(+). The interaction with DNA stretch occupies residues glycine 184 to serine 189.

This sequence belongs to the Xni family. Requires Mg(2+) as cofactor. K(+) serves as cofactor.

Functionally, has flap endonuclease activity. During DNA replication, flap endonucleases cleave the 5'-overhanging flap structure that is generated by displacement synthesis when DNA polymerase encounters the 5'-end of a downstream Okazaki fragment. This is Flap endonuclease Xni from Salmonella schwarzengrund (strain CVM19633).